A 552-amino-acid chain; its full sequence is Protein TRM32 (552 aa).

The interval 295–379 (TDLPRDSSTS…NKTAEKTETL (85 aa)) is disordered. Basic and acidic residues predominate over residues 331-351 (VRAEKEEKYEVQEERSQENHL). Polar residues predominate over residues 352 to 371 (DSSNQRILQQEPDSVPSTNK).

The chain is Protein TRM32 (TRM32) from Arabidopsis thaliana (Mouse-ear cress).